The chain runs to 382 residues: Biotin synthase (382 aa).

Residues 83 to 318 (CCGNVVDLCS…EQILRYAGGR (236 aa)) enclose the Radical SAM core domain. [4Fe-4S] cluster-binding residues include cysteine 101, cysteine 105, and cysteine 108. Residues cysteine 146, cysteine 183, cysteine 243, and arginine 313 each coordinate [2Fe-2S] cluster.

It belongs to the radical SAM superfamily. Biotin synthase family. Homodimer. The cofactor is [4Fe-4S] cluster. [2Fe-2S] cluster is required as a cofactor.

The enzyme catalyses (4R,5S)-dethiobiotin + (sulfur carrier)-SH + 2 reduced [2Fe-2S]-[ferredoxin] + 2 S-adenosyl-L-methionine = (sulfur carrier)-H + biotin + 2 5'-deoxyadenosine + 2 L-methionine + 2 oxidized [2Fe-2S]-[ferredoxin]. It participates in cofactor biosynthesis; biotin biosynthesis; biotin from 7,8-diaminononanoate: step 2/2. In terms of biological role, catalyzes the conversion of dethiobiotin (DTB) to biotin by the insertion of a sulfur atom into dethiobiotin via a radical-based mechanism. The chain is Biotin synthase from Crocosphaera subtropica (strain ATCC 51142 / BH68) (Cyanothece sp. (strain ATCC 51142)).